The sequence spans 296 residues: CCAAT/enhancer-binding protein beta (296 aa).

The interval 1 to 22 is required for Lys-133 sumoylation; sequence MHRLLAWDAACLPPPPAAFRPM. An Asymmetric dimethylarginine; by CARM1 modification is found at Arg-3. The interval 22-104 is required for MYC transcriptional repression; the sequence is MEVANFYYEP…YGAKPSKKPA (83 aa). Lys-39 is modified (N6-acetyllysine; alternate). Position 39 is an N6-methylated lysine; alternate (Lys-39). An N6-acetyllysine; by KAT2A and KAT2B mark is found at Lys-98 and Lys-101. Lys-102 bears the N6-acetyllysine; by KAT2A and KAT2B; alternate mark. Residues Lys-102 and Lys-133 each participate in a glycyl lysine isopeptide (Lys-Gly) (interchain with G-Cter in SUMO2); alternate cross-link. Residue Lys-133 forms a Glycyl lysine isopeptide (Lys-Gly) (interchain with G-Cter in SUMO); alternate linkage. Residue Lys-144 forms a Glycyl lysine isopeptide (Lys-Gly) (interchain with G-Cter in SUMO2) linkage. Residues 171–199 form a disordered region; it reads SGSSGSLSTSSSSSPPGTPSPADAKAAPA. Thr-179 is subject to Phosphothreonine; by GSK3-beta. O-linked (GlcNAc) serine glycans are attached at residues Ser-180 and Ser-181. Ser-184 carries the post-translational modification Phosphoserine; by GSK3-beta. A Phosphothreonine; by RPS6KA1, CDK2 and MAPK modification is found at Thr-188. Residues Lys-211 and Lys-213 each participate in a glycyl lysine isopeptide (Lys-Gly) (interchain with G-Cter in SUMO2) cross-link. Thr-217 carries the phosphothreonine; by RPS6KA1 and PKC/PRKCA modification. The bZIP domain occupies 222 to 285; the sequence is SDEYKMRRER…STLRNLFKQL (64 aa). The tract at residues 226 to 246 is basic motif; the sequence is KMRRERNNIAVRKSRDKAKMR. Ser-239 is subject to Phosphoserine; by PKC/PRKCA. Residues 248–255 are leucine-zipper; the sequence is LETQHKVL. Position 276 is a phosphoserine; by CaMK2 (Ser-276). Lys-283 is covalently cross-linked (Glycyl lysine isopeptide (Lys-Gly) (interchain with G-Cter in SUMO2)).

It belongs to the bZIP family. C/EBP subfamily. As to quaternary structure, binds DNA as a homodimer and as a heterodimer. Interacts with ATF4. Binds DNA as a heterodimer with ATF4. Interacts with MYB; within the complex, MYB and CEBPB bind to different promoter regions. Can form stable heterodimers with CEBPA, CEBPD and CEBPE. Interacts with SIX1. Isoform 2 and isoform 3 also form heterodimers. Interacts with TRIM28 and PTGES2. Interacts with PRDM16. Interacts with CCDC85B. Forms a complex with THOC5. Interacts with ZNF638; this interaction increases transcriptional activation. Interacts with CIDEA and CIDEC. Interaction with CIDEA increases transcriptional activation of a subset of CEBPB downstream target genes, including ID2, IGF1, PRLR, SOCS1, SOCS3, XDH. Interaction with CIDEC increases transcriptional activation of SOCS1, SOCS3, TGFB1, TGFBR1, ID2 and XDH. Interacts with DDIT3/CHOP. Interacts with EP300; recruits EP300 to chromatin. Interacts with RORA; the interaction disrupts interaction with EP300. Interacts (not methylated) with MED23, MED26, SMARCA2, SMARCB1 and SMARCC1. Interacts with KAT2A and KAT2B. Interacts with ATF5; EP300 is required for ATF5 and CEBPB interaction and DNA binding. Interacts with NFE2L1; the heterodimer represses expression of DSPP during odontoblast differentiation. Post-translationally, sumoylated by polymeric chains of SUMO2 or SUMO3. Sumoylation at Lys-133 is required for inhibition of T-cells proliferation. In adipocytes, sumoylation at Lys-133 by PIAS1 leads to ubiquitination and subsequent proteasomal degradation. Desumoylated by SENP2, which abolishes ubiquitination and stabilizes protein levels. In terms of processing, ubiquitinated, leading to proteasomal degradation. Phosphorylated at Thr-188 by MAPK and CDK2, serves to prime phosphorylation at Thr-179 and Ser-184 by GSK3B and acquire DNA-binding as well as transactivation activities, required to induce adipogenesis. MAPK and CDK2 act sequentially to maintain Thr-188 in the primed phosphorylated state during mitotical cloning expansion and thereby progression of terminal differentiation. Phosphorylation at Thr-217 enhances transactivation activity. Phosphorylation at Ser-276 in response to calcium increases transactivation activity. Phosphorylated at Thr-188 by RPS6KA1. Post-translationally, O-glycosylated, glycosylation at Ser-180 and Ser-181 prevents phosphorylation on Thr-188, Ser-184 and Thr-179 and DNA binding activity which delays the adipocyte differentiation program. In terms of processing, acetylated. Acetylation at Lys-39 is an important and dynamic regulatory event that contributes to its ability to transactivate target genes, including those associated with adipogenesis and adipocyte function. Deacetylation by HDAC1 represses its transactivation activity. Acetylated by KAT2A and KAT2B within a cluster of lysine residues between amino acids 98-102, this acetylation is strongly induced by glucocorticoid treatment and enhances transactivation activity. Methylated. Methylation at Arg-3 by CARM1 and at Lys-39 by EHMT2, inhibits transactivation activity. Methylation is probably inhibited by phosphorylation at Thr-188. Abundantly expressed in myoblasts. Enriched in brown adipose tissue (BAT) versus white adipose tissue (WAT). Expressed in hepatocytes (at protein level). Expressed in T lymphocytes. The expression in granulosa cells of antral follicles is induced by luteinizing hormone. Expressed in chondrocytes and osteoblasts (at protein level).

Its subcellular location is the nucleus. The protein resides in the cytoplasm. In terms of biological role, important transcription factor regulating the expression of genes involved in immune and inflammatory responses. Also plays a significant role in adipogenesis, as well as in the gluconeogenic pathway, liver regeneration, and hematopoiesis. The consensus recognition site is 5'-T[TG]NNGNAA[TG]-3'. Its functional capacity is governed by protein interactions and post-translational protein modifications. During early embryogenesis, plays essential and redundant roles with CEBPA. Has a promitotic effect on many cell types such as hepatocytes and adipocytes but has an antiproliferative effect on T-cells by repressing MYC expression, facilitating differentiation along the T-helper 2 lineage. Binds to regulatory regions of several acute-phase and cytokines genes and plays a role in the regulation of acute-phase reaction and inflammation. Also plays a role in intracellular bacteria killing. During adipogenesis, is rapidly expressed and, after activation by phosphorylation, induces CEBPA and PPARG, which turn on the series of adipocyte genes that give rise to the adipocyte phenotype. The delayed transactivation of the CEBPA and PPARG genes by CEBPB appears necessary to allow mitotic clonal expansion and thereby progression of terminal differentiation. Essential for female reproduction because of a critical role in ovarian follicle development. Restricts osteoclastogenesis. Together with NFE2L1; represses expression of DSPP during odontoblast differentiation. Its function is as follows. Essential for gene expression induction in activated macrophages. Plays a major role in immune responses such as CD4(+) T-cell response, granuloma formation and endotoxin shock. Not essential for intracellular bacteria killing. Functionally, acts as a dominant negative through heterodimerization with isoform 2. Promotes osteoblast differentiation and osteoclastogenesis. This Mus musculus (Mouse) protein is CCAAT/enhancer-binding protein beta.